The sequence spans 60 residues: Cytotoxin 1 (60 aa).

Disulfide bonds link Cys3/Cys21, Cys14/Cys38, Cys42/Cys53, and Cys54/Cys59.

It belongs to the three-finger toxin family. Short-chain subfamily. Type IA cytotoxin sub-subfamily. As to quaternary structure, monomer in solution; Homodimer and oligomer in the presence of negatively charged lipids forming a pore with a size ranging between 20 and 30 Angstroms. Expressed by the venom gland.

It is found in the secreted. It localises to the target cell membrane. Functionally, produces complete blockade of auricular contraction, which is irreversible at high concentrations. Induces apoptosis in leukemic cells. Possesses anti-arthritic and anti-inflammatory potential. The polypeptide is Cytotoxin 1 (Naja kaouthia (Monocled cobra)).